Consider the following 882-residue polypeptide: DNA mismatch repair protein MutS (882 aa).

ATP is bound at residue 626-633 (GPNMAGKS).

The protein belongs to the DNA mismatch repair MutS family.

This protein is involved in the repair of mismatches in DNA. It is possible that it carries out the mismatch recognition step. This protein has a weak ATPase activity. The chain is DNA mismatch repair protein MutS from Anaeromyxobacter sp. (strain Fw109-5).